We begin with the raw amino-acid sequence, 399 residues long: Elongation factor Tu (399 aa).

In terms of domain architecture, tr-type G spans 10–209; sequence KPHVNIGTIG…AVDSYIPTPV (200 aa). A G1 region spans residues 19–26; sequence GHVDHGKT. GTP is bound at residue 19-26; that stretch reads GHVDHGKT. Mg(2+) is bound at residue Thr26. The interval 60-64 is G2; that stretch reads GITIA. The interval 81-84 is G3; sequence DCPG. Residues 81 to 85 and 136 to 139 each bind GTP; these read DCPGH and NKAD. A G4 region spans residues 136 to 139; sequence NKAD. The interval 174–176 is G5; the sequence is SAL.

Belongs to the TRAFAC class translation factor GTPase superfamily. Classic translation factor GTPase family. EF-Tu/EF-1A subfamily. In terms of assembly, monomer.

The protein resides in the cytoplasm. The catalysed reaction is GTP + H2O = GDP + phosphate + H(+). In terms of biological role, GTP hydrolase that promotes the GTP-dependent binding of aminoacyl-tRNA to the A-site of ribosomes during protein biosynthesis. In Campylobacter fetus subsp. fetus (strain 82-40), this protein is Elongation factor Tu.